A 343-amino-acid chain; its full sequence is DNA-directed RNA polymerase subunit alpha (343 aa).

The alpha N-terminal domain (alpha-NTD) stretch occupies residues Met-1–Glu-239. Residues Phe-255 to Tyr-343 form an alpha C-terminal domain (alpha-CTD) region.

Belongs to the RNA polymerase alpha chain family. In terms of assembly, homodimer. The RNAP catalytic core consists of 2 alpha, 1 beta, 1 beta' and 1 omega subunit. When a sigma factor is associated with the core the holoenzyme is formed, which can initiate transcription.

It carries out the reaction RNA(n) + a ribonucleoside 5'-triphosphate = RNA(n+1) + diphosphate. Functionally, DNA-dependent RNA polymerase catalyzes the transcription of DNA into RNA using the four ribonucleoside triphosphates as substrates. The chain is DNA-directed RNA polymerase subunit alpha from Bradyrhizobium sp. (strain BTAi1 / ATCC BAA-1182).